The sequence spans 1917 residues: Diacylglycerol kinase eta (1917 aa).

Basic and acidic residues predominate over residues 1-10 (MSHLKLDTLH). Positions 1–37 (MSHLKLDTLHVQRSPRGSRRSSRSSGRSSACSSGSIS) are disordered. A compositionally biased stretch (low complexity) spans 23-37 (RSSGRSSACSSGSIS). The PH domain occupies 82-175 (AIIKEGFLLK…WLGSLKTATA (94 aa)). 2 consecutive Phorbol-ester/DAG-type zinc fingers follow at residues 195–245 (HHHW…IANC) and 268–319 (PHQW…AVAC). Residues 350–486 (GNFSPLLVFV…DRWSIMVFEK (137 aa)) form the DAGKc domain. Disordered stretches follow at residues 1015–1053 (TTLC…PPRI), 1114–1149 (LEQQ…SEDE), and 1380–1399 (KDKD…EETN). The segment covering 1128-1145 (PEQQQTPTNKGPNSLATT) has biased composition (polar residues). The region spanning 1854 to 1917 (WSVNEVVTWL…LQAIKDLSEN (64 aa)) is the SAM domain.

This sequence belongs to the eukaryotic diacylglycerol kinase family.

It is found in the cytoplasm. The catalysed reaction is a 1,2-diacyl-sn-glycerol + ATP = a 1,2-diacyl-sn-glycero-3-phosphate + ADP + H(+). Its function is as follows. Phosphorylates diacylglycerol (DAG) to generate phosphatidic acid (PA). The protein is Diacylglycerol kinase eta of Drosophila yakuba (Fruit fly).